A 429-amino-acid chain; its full sequence is Bifunctional protein GlmU (429 aa).

Positions 1–223 (MKTSILILAA…EDEFMGINDK (223 aa)) are pyrophosphorylase. UDP-N-acetyl-alpha-D-glucosamine-binding positions include 8–11 (LAAG), lysine 22, and 81–82 (GT). Position 102 (aspartate 102) interacts with Mg(2+). UDP-N-acetyl-alpha-D-glucosamine is bound by residues glycine 135, glutamate 149, asparagine 164, and asparagine 221. Asparagine 221 contributes to the Mg(2+) binding site. A linker region spans residues 224–244 (FELSIAENFMQEKIKKYWMQQ). Positions 245 to 429 (GVIFHLPQST…KDYYYKKFQK (185 aa)) are N-acetyltransferase. 2 residues coordinate UDP-N-acetyl-alpha-D-glucosamine: arginine 308 and lysine 325. Histidine 336 acts as the Proton acceptor in catalysis. UDP-N-acetyl-alpha-D-glucosamine contacts are provided by tyrosine 339 and asparagine 350. Acetyl-CoA contacts are provided by residues 359-360 (NY), serine 378, alanine 396, and arginine 413.

In the N-terminal section; belongs to the N-acetylglucosamine-1-phosphate uridyltransferase family. It in the C-terminal section; belongs to the transferase hexapeptide repeat family. As to quaternary structure, homotrimer. Requires Mg(2+) as cofactor.

It is found in the cytoplasm. It catalyses the reaction alpha-D-glucosamine 1-phosphate + acetyl-CoA = N-acetyl-alpha-D-glucosamine 1-phosphate + CoA + H(+). The enzyme catalyses N-acetyl-alpha-D-glucosamine 1-phosphate + UTP + H(+) = UDP-N-acetyl-alpha-D-glucosamine + diphosphate. The protein operates within nucleotide-sugar biosynthesis; UDP-N-acetyl-alpha-D-glucosamine biosynthesis; N-acetyl-alpha-D-glucosamine 1-phosphate from alpha-D-glucosamine 6-phosphate (route II): step 2/2. It participates in nucleotide-sugar biosynthesis; UDP-N-acetyl-alpha-D-glucosamine biosynthesis; UDP-N-acetyl-alpha-D-glucosamine from N-acetyl-alpha-D-glucosamine 1-phosphate: step 1/1. It functions in the pathway bacterial outer membrane biogenesis; LPS lipid A biosynthesis. Its function is as follows. Catalyzes the last two sequential reactions in the de novo biosynthetic pathway for UDP-N-acetylglucosamine (UDP-GlcNAc). The C-terminal domain catalyzes the transfer of acetyl group from acetyl coenzyme A to glucosamine-1-phosphate (GlcN-1-P) to produce N-acetylglucosamine-1-phosphate (GlcNAc-1-P), which is converted into UDP-GlcNAc by the transfer of uridine 5-monophosphate (from uridine 5-triphosphate), a reaction catalyzed by the N-terminal domain. This chain is Bifunctional protein GlmU, found in Campylobacter jejuni subsp. jejuni serotype O:23/36 (strain 81-176).